We begin with the raw amino-acid sequence, 201 residues long: Holliday junction branch migration complex subunit RuvA (201 aa).

Positions 1–64 are domain I; that stretch reads MFAYIKGVLA…EFSHTLYGFL (64 aa). Residues 65 to 143 form a domain II region; it reads SYQERDIFEI…AIGHLDTSDH (79 aa). A flexible linker region spans residues 144-153; it reads IEPLTQDPKS. A domain III region spans residues 153 to 201; sequence SKSVQDAMLALINLGYNQTTAQKAIKQGMKELPEEIDLAQLITVALKHV.

This sequence belongs to the RuvA family. As to quaternary structure, homotetramer. Forms an RuvA(8)-RuvB(12)-Holliday junction (HJ) complex. HJ DNA is sandwiched between 2 RuvA tetramers; dsDNA enters through RuvA and exits via RuvB. An RuvB hexamer assembles on each DNA strand where it exits the tetramer. Each RuvB hexamer is contacted by two RuvA subunits (via domain III) on 2 adjacent RuvB subunits; this complex drives branch migration. In the full resolvosome a probable DNA-RuvA(4)-RuvB(12)-RuvC(2) complex forms which resolves the HJ.

The protein localises to the cytoplasm. The RuvA-RuvB-RuvC complex processes Holliday junction (HJ) DNA during genetic recombination and DNA repair, while the RuvA-RuvB complex plays an important role in the rescue of blocked DNA replication forks via replication fork reversal (RFR). RuvA specifically binds to HJ cruciform DNA, conferring on it an open structure. The RuvB hexamer acts as an ATP-dependent pump, pulling dsDNA into and through the RuvAB complex. HJ branch migration allows RuvC to scan DNA until it finds its consensus sequence, where it cleaves and resolves the cruciform DNA. The protein is Holliday junction branch migration complex subunit RuvA of Protochlamydia amoebophila (strain UWE25).